Reading from the N-terminus, the 659-residue chain is L-type lectin-domain containing receptor kinase V.7 (659 aa).

Positions 1–25 (MSHKVLQIVLVLLLTLFSSTHNSNG) are cleaved as a signal peptide. A legume-lectin like region spans residues 22–244 (NSNGNFLMEE…GALYYVMQFS (223 aa)). The Extracellular segment spans residues 26–275 (NFLMEEAAAA…PKKSYDRTRR (250 aa)). 4 N-linked (GlcNAc...) asparagine glycosylation sites follow: N45, N64, N110, and N192. The helical transmembrane segment at 276–296 (ILAVCLTLAVFTALVASGIGF) threads the bilayer. Residues 297-659 (VFYVRHKKVK…LTNSFVSHGR (363 aa)) are Cytoplasmic-facing. Residues 333–595 (FKEKQLLGKG…GLLCAHHTEL (263 aa)) form the Protein kinase domain. Residues 339–347 (LGKGGFGQV) and K362 contribute to the ATP site. D462 (proton acceptor) is an active-site residue.

In the C-terminal section; belongs to the protein kinase superfamily. Ser/Thr protein kinase family. It in the N-terminal section; belongs to the leguminous lectin family.

It is found in the cell membrane. The catalysed reaction is L-seryl-[protein] + ATP = O-phospho-L-seryl-[protein] + ADP + H(+). It catalyses the reaction L-threonyl-[protein] + ATP = O-phospho-L-threonyl-[protein] + ADP + H(+). Its function is as follows. Involved in resistance response to the pathogenic oomycetes Phytophthora infestans and Phytophthora capsici and to the pathogenic bacteria Pseudomonas syringae. The protein is L-type lectin-domain containing receptor kinase V.7 of Arabidopsis thaliana (Mouse-ear cress).